The primary structure comprises 596 residues: Aspartate--tRNA(Asp/Asn) ligase (596 aa).

E175 is a binding site for L-aspartate. The aspartate stretch occupies residues 199 to 202 (QQYK). L-aspartate is bound by residues R221 and H454. 221 to 223 (RDE) is an ATP binding site. E488 serves as a coordination point for ATP. R495 contacts L-aspartate. Position 540–543 (540–543 (GIDR)) interacts with ATP.

The protein belongs to the class-II aminoacyl-tRNA synthetase family. Type 1 subfamily. In terms of assembly, homodimer.

The protein resides in the cytoplasm. It carries out the reaction tRNA(Asx) + L-aspartate + ATP = L-aspartyl-tRNA(Asx) + AMP + diphosphate. Functionally, aspartyl-tRNA synthetase with relaxed tRNA specificity since it is able to aspartylate not only its cognate tRNA(Asp) but also tRNA(Asn). Reaction proceeds in two steps: L-aspartate is first activated by ATP to form Asp-AMP and then transferred to the acceptor end of tRNA(Asp/Asn). The sequence is that of Aspartate--tRNA(Asp/Asn) ligase from Rhizobium rhizogenes (strain K84 / ATCC BAA-868) (Agrobacterium radiobacter).